The chain runs to 361 residues: MSDIERLEQEIFLALEAACDEQELEAVRVAALGKKGSISERLKALGNISADERLKVGPALNELKKRILELLAQKRDIFKRQATALRLSKERVDVTLPVRSSPVERGRIHPISQVIDELIAIYADMGFSIAEGPDIETDYYNFTALNFPEGHPAREMHDTFFFSEDATGNRKVLRTHTSPVQIRVMEKKQAPIRIIIPGKTYRMDSDATHSPMFHQVEGLVIDKTSNIAHMMWLHETFCKAFFEVPSVKMRFRPSFFPFTEPSMEVDIQCDRSGSEVKFGEGHDWLEILGCGMVHPQVLKNVGFDPDEYQGFAWGMGIDRIAMLKYGMPDLRAFFDADLRWLDHYGFRCFDISTLFSRLGNV.

Glutamate 260 lines the Mg(2+) pocket.

It belongs to the class-II aminoacyl-tRNA synthetase family. Phe-tRNA synthetase alpha subunit type 1 subfamily. In terms of assembly, tetramer of two alpha and two beta subunits. Requires Mg(2+) as cofactor.

It localises to the cytoplasm. It carries out the reaction tRNA(Phe) + L-phenylalanine + ATP = L-phenylalanyl-tRNA(Phe) + AMP + diphosphate + H(+). This chain is Phenylalanine--tRNA ligase alpha subunit, found in Bartonella bacilliformis (strain ATCC 35685 / KC583 / Herrer 020/F12,63).